Consider the following 201-residue polypeptide: Holliday junction branch migration complex subunit RuvA (201 aa).

The segment at 1–63 (MIAYLSGVVR…EDAQLLFGFP (63 aa)) is domain I. The tract at residues 64–142 (DADHLKLFDL…EHLAAAASGA (79 aa)) is domain II. Residues 143 to 150 (AGGKRPAR) are flexible linker. Residues 151–201 (VSSTAGHDAVDALLALGFREAQVRAAVAELLGADPEASADTLIRKALGRLR) are domain III.

The protein belongs to the RuvA family. In terms of assembly, homotetramer. Forms an RuvA(8)-RuvB(12)-Holliday junction (HJ) complex. HJ DNA is sandwiched between 2 RuvA tetramers; dsDNA enters through RuvA and exits via RuvB. An RuvB hexamer assembles on each DNA strand where it exits the tetramer. Each RuvB hexamer is contacted by two RuvA subunits (via domain III) on 2 adjacent RuvB subunits; this complex drives branch migration. In the full resolvosome a probable DNA-RuvA(4)-RuvB(12)-RuvC(2) complex forms which resolves the HJ.

The protein resides in the cytoplasm. In terms of biological role, the RuvA-RuvB-RuvC complex processes Holliday junction (HJ) DNA during genetic recombination and DNA repair, while the RuvA-RuvB complex plays an important role in the rescue of blocked DNA replication forks via replication fork reversal (RFR). RuvA specifically binds to HJ cruciform DNA, conferring on it an open structure. The RuvB hexamer acts as an ATP-dependent pump, pulling dsDNA into and through the RuvAB complex. HJ branch migration allows RuvC to scan DNA until it finds its consensus sequence, where it cleaves and resolves the cruciform DNA. In Deinococcus radiodurans (strain ATCC 13939 / DSM 20539 / JCM 16871 / CCUG 27074 / LMG 4051 / NBRC 15346 / NCIMB 9279 / VKM B-1422 / R1), this protein is Holliday junction branch migration complex subunit RuvA.